A 731-amino-acid polypeptide reads, in one-letter code: Ubiquitin carboxyl-terminal hydrolase 17 (731 aa).

Positions 57, 60, 68, 71, 77, 81, 90, and 94 each coordinate Zn(2+). The segment at 57 to 94 (CAVCLYPTTTRCSQCKSVRYCSSKCQILHWRRGHKEEC) adopts an MYND-type zinc-finger fold. 2 disordered regions span residues 171–219 (YETR…DSAN) and 262–281 (LPSK…SGLK). Composition is skewed to polar residues over residues 207 to 219 (GNQN…DSAN) and 265 to 281 (KANS…SGLK). A USP domain is found at 329 to 633 (FGLVNLGNSC…GAYMLLYARD (305 aa)). Cysteine 338 functions as the Nucleophile in the catalytic mechanism. Histidine 592 functions as the Proton acceptor in the catalytic mechanism. Residues 637–702 (PVSKNGGRKS…TSSCSTKDSS (66 aa)) form a disordered region. A compositionally biased stretch (low complexity) spans 677–701 (DWSSGSLSSMFSSSDTTSSCSTKDS).

The protein belongs to the peptidase C19 family.

The enzyme catalyses Thiol-dependent hydrolysis of ester, thioester, amide, peptide and isopeptide bonds formed by the C-terminal Gly of ubiquitin (a 76-residue protein attached to proteins as an intracellular targeting signal).. In terms of biological role, recognizes and hydrolyzes the peptide bond at the C-terminal Gly of ubiquitin. Involved in the processing of poly-ubiquitin precursors as well as that of ubiquitinated proteins. This is Ubiquitin carboxyl-terminal hydrolase 17 (UBP17) from Arabidopsis thaliana (Mouse-ear cress).